Reading from the N-terminus, the 105-residue chain is Small ribosomal subunit protein uS10c (105 aa).

It belongs to the universal ribosomal protein uS10 family. As to quaternary structure, part of the 30S ribosomal subunit.

It is found in the plastid. It localises to the cyanelle. Involved in the binding of tRNA to the ribosomes. This is Small ribosomal subunit protein uS10c (rps10) from Cyanophora paradoxa.